Consider the following 348-residue polypeptide: 4-hydroxy-3-methylbut-2-enyl diphosphate reductase (348 aa).

[4Fe-4S] cluster is bound at residue Cys-21. (2E)-4-hydroxy-3-methylbut-2-enyl diphosphate is bound by residues His-50 and His-86. His-50 and His-86 together coordinate dimethylallyl diphosphate. Residues His-50 and His-86 each coordinate isopentenyl diphosphate. [4Fe-4S] cluster is bound at residue Cys-108. His-136 contacts (2E)-4-hydroxy-3-methylbut-2-enyl diphosphate. His-136 serves as a coordination point for dimethylallyl diphosphate. His-136 contributes to the isopentenyl diphosphate binding site. The active-site Proton donor is Glu-138. Thr-177 contributes to the (2E)-4-hydroxy-3-methylbut-2-enyl diphosphate binding site. Cys-207 serves as a coordination point for [4Fe-4S] cluster. Residues Ser-235, Ser-236, Asn-237, and Ser-280 each coordinate (2E)-4-hydroxy-3-methylbut-2-enyl diphosphate. The dimethylallyl diphosphate site is built by Ser-235, Ser-236, Asn-237, and Ser-280. The isopentenyl diphosphate site is built by Ser-235, Ser-236, Asn-237, and Ser-280.

The protein belongs to the IspH family. It depends on [4Fe-4S] cluster as a cofactor.

The catalysed reaction is isopentenyl diphosphate + 2 oxidized [2Fe-2S]-[ferredoxin] + H2O = (2E)-4-hydroxy-3-methylbut-2-enyl diphosphate + 2 reduced [2Fe-2S]-[ferredoxin] + 2 H(+). It catalyses the reaction dimethylallyl diphosphate + 2 oxidized [2Fe-2S]-[ferredoxin] + H2O = (2E)-4-hydroxy-3-methylbut-2-enyl diphosphate + 2 reduced [2Fe-2S]-[ferredoxin] + 2 H(+). Its pathway is isoprenoid biosynthesis; dimethylallyl diphosphate biosynthesis; dimethylallyl diphosphate from (2E)-4-hydroxy-3-methylbutenyl diphosphate: step 1/1. The protein operates within isoprenoid biosynthesis; isopentenyl diphosphate biosynthesis via DXP pathway; isopentenyl diphosphate from 1-deoxy-D-xylulose 5-phosphate: step 6/6. In terms of biological role, catalyzes the conversion of 1-hydroxy-2-methyl-2-(E)-butenyl 4-diphosphate (HMBPP) into a mixture of isopentenyl diphosphate (IPP) and dimethylallyl diphosphate (DMAPP). Acts in the terminal step of the DOXP/MEP pathway for isoprenoid precursor biosynthesis. This Agrobacterium fabrum (strain C58 / ATCC 33970) (Agrobacterium tumefaciens (strain C58)) protein is 4-hydroxy-3-methylbut-2-enyl diphosphate reductase.